The primary structure comprises 546 residues: (-)-5-epieremophilene synthase STPS3 (546 aa).

D299, D303, D442, T446, and E450 together coordinate Mg(2+). The short motif at 299–303 (DDTYD) is the DDXXD motif element.

The protein belongs to the terpene synthase family. Tpsa subfamily. Monomer. Mg(2+) is required as a cofactor. As to expression, highly expressed in flowers and at lower levels in leaves.

The catalysed reaction is (2E,6E)-farnesyl diphosphate = (-)-5-epi-eremophilene + diphosphate. The protein operates within secondary metabolite biosynthesis; terpenoid biosynthesis. In terms of biological role, sesquiterpene synthase that catalyzes the conversion of farnesyl diphosphate to (-)-5-epi-eremophilene. This Salvia miltiorrhiza (Chinese sage) protein is (-)-5-epieremophilene synthase STPS3.